The chain runs to 232 residues: Phosphatidylserine decarboxylase proenzyme (232 aa).

S190 serves as the catalytic Schiff-base intermediate with substrate; via pyruvic acid. S190 carries the post-translational modification Pyruvic acid (Ser); by autocatalysis.

Belongs to the phosphatidylserine decarboxylase family. PSD-A subfamily. As to quaternary structure, heterodimer of a large membrane-associated beta subunit and a small pyruvoyl-containing alpha subunit. Requires pyruvate as cofactor. In terms of processing, is synthesized initially as an inactive proenzyme. Formation of the active enzyme involves a self-maturation process in which the active site pyruvoyl group is generated from an internal serine residue via an autocatalytic post-translational modification. Two non-identical subunits are generated from the proenzyme in this reaction, and the pyruvate is formed at the N-terminus of the alpha chain, which is derived from the carboxyl end of the proenzyme. The post-translation cleavage follows an unusual pathway, termed non-hydrolytic serinolysis, in which the side chain hydroxyl group of the serine supplies its oxygen atom to form the C-terminus of the beta chain, while the remainder of the serine residue undergoes an oxidative deamination to produce ammonia and the pyruvoyl prosthetic group on the alpha chain.

Its subcellular location is the cell membrane. The enzyme catalyses a 1,2-diacyl-sn-glycero-3-phospho-L-serine + H(+) = a 1,2-diacyl-sn-glycero-3-phosphoethanolamine + CO2. The protein operates within phospholipid metabolism; phosphatidylethanolamine biosynthesis; phosphatidylethanolamine from CDP-diacylglycerol: step 2/2. Catalyzes the formation of phosphatidylethanolamine (PtdEtn) from phosphatidylserine (PtdSer). This Brucella canis (strain ATCC 23365 / NCTC 10854 / RM-666) protein is Phosphatidylserine decarboxylase proenzyme.